The chain runs to 336 residues: Holliday junction branch migration complex subunit RuvB (336 aa).

A large ATPase domain (RuvB-L) region spans residues 1–182; that stretch reads MKERIVNLET…FGMSFRMQFY (182 aa). ATP contacts are provided by residues Leu21, Arg22, Gly63, Lys66, Thr67, Ser68, 129-131, Arg172, Tyr182, and Arg219; that span reads EDF. Thr67 provides a ligand contact to Mg(2+). The segment at 183–253 is small ATPAse domain (RuvB-S); the sequence is SPSELSLIIK…ITLHALNELG (71 aa). The head domain (RuvB-H) stretch occupies residues 256-336; sequence ELGFDEADLA…IPTLNPQTLF (81 aa). Residues Arg310 and Arg315 each contribute to the DNA site.

The protein belongs to the RuvB family. Homohexamer. Forms an RuvA(8)-RuvB(12)-Holliday junction (HJ) complex. HJ DNA is sandwiched between 2 RuvA tetramers; dsDNA enters through RuvA and exits via RuvB. An RuvB hexamer assembles on each DNA strand where it exits the tetramer. Each RuvB hexamer is contacted by two RuvA subunits (via domain III) on 2 adjacent RuvB subunits; this complex drives branch migration. In the full resolvosome a probable DNA-RuvA(4)-RuvB(12)-RuvC(2) complex forms which resolves the HJ.

It is found in the cytoplasm. It carries out the reaction ATP + H2O = ADP + phosphate + H(+). Its function is as follows. The RuvA-RuvB-RuvC complex processes Holliday junction (HJ) DNA during genetic recombination and DNA repair, while the RuvA-RuvB complex plays an important role in the rescue of blocked DNA replication forks via replication fork reversal (RFR). RuvA specifically binds to HJ cruciform DNA, conferring on it an open structure. The RuvB hexamer acts as an ATP-dependent pump, pulling dsDNA into and through the RuvAB complex. RuvB forms 2 homohexamers on either side of HJ DNA bound by 1 or 2 RuvA tetramers; 4 subunits per hexamer contact DNA at a time. Coordinated motions by a converter formed by DNA-disengaged RuvB subunits stimulates ATP hydrolysis and nucleotide exchange. Immobilization of the converter enables RuvB to convert the ATP-contained energy into a lever motion, pulling 2 nucleotides of DNA out of the RuvA tetramer per ATP hydrolyzed, thus driving DNA branch migration. The RuvB motors rotate together with the DNA substrate, which together with the progressing nucleotide cycle form the mechanistic basis for DNA recombination by continuous HJ branch migration. Branch migration allows RuvC to scan DNA until it finds its consensus sequence, where it cleaves and resolves cruciform DNA. This is Holliday junction branch migration complex subunit RuvB from Helicobacter pylori (strain J99 / ATCC 700824) (Campylobacter pylori J99).